We begin with the raw amino-acid sequence, 235 residues long: Ribonuclease PH (235 aa).

Phosphate-binding positions include R86 and 124–126 (GTR).

The protein belongs to the RNase PH family. Homohexameric ring arranged as a trimer of dimers.

The enzyme catalyses tRNA(n+1) + phosphate = tRNA(n) + a ribonucleoside 5'-diphosphate. In terms of biological role, phosphorolytic 3'-5' exoribonuclease that plays an important role in tRNA 3'-end maturation. Removes nucleotide residues following the 3'-CCA terminus of tRNAs; can also add nucleotides to the ends of RNA molecules by using nucleoside diphosphates as substrates, but this may not be physiologically important. Probably plays a role in initiation of 16S rRNA degradation (leading to ribosome degradation) during starvation. The sequence is that of Ribonuclease PH from Legionella pneumophila (strain Paris).